Here is a 441-residue protein sequence, read N- to C-terminus: MFGAKKGNGHNKDFYDFNPKNLETIRNDLKNRHAELVIDALLKEEARQEIKRIIKRDYPVHFMDIDEDKVDDVIEYVVSELVGTGVIERLIKDRPDITDISYNGSHLIVESSDYKEIYKDNEHQITEQYITRLIQKFAHAVGKEFTPKNPIFDGVYGSIRINAVHSQNTNGNSTMSLRIVRPNLVLNEKNFETFAPQFIYDFFKVVMESRNNILISGETGTGKTEVLKLLFSFVRFDHKAIMIEDVPETHVKSLFPDKDVFSWLTGNGVTVTDEIVAALRNNPRWIMISELRGKETYEMIQAVLSGHHVVTSLHSVDAETSPKRLVNMSKIGYQVDEKSLEEDIMRYFNFGFHIKRVVVKTTDTTGKPIKRVVRYLAKIVEYSVEGCQMVFEQKYRNGKFTFSTGTLSEEFHDKLAEIDLSYELPKYTDEVAFKKGLIISR.

217–224 serves as a coordination point for ATP; the sequence is GETGTGKT.

The protein belongs to the GSP E family.

This is an uncharacterized protein from Bacillus anthracis.